The sequence spans 213 residues: Probable GTP-binding protein EngB (213 aa).

The EngB-type G domain maps to 25-203 (EGTEVAFAGR…EDVLNGWLLP (179 aa)). Residues 33–40 (GRSNAGKS), 60–64 (GRTQL), 80–83 (DLPG), 147–150 (TKAD), and 179–184 (AQMFSA) contribute to the GTP site. Residues S40 and T62 each contribute to the Mg(2+) site.

It belongs to the TRAFAC class TrmE-Era-EngA-EngB-Septin-like GTPase superfamily. EngB GTPase family. Mg(2+) serves as cofactor.

Functionally, necessary for normal cell division and for the maintenance of normal septation. This Saccharophagus degradans (strain 2-40 / ATCC 43961 / DSM 17024) protein is Probable GTP-binding protein EngB.